Here is a 186-residue protein sequence, read N- to C-terminus: Cytochrome c oxidase polypeptide 5, mitochondrial (186 aa).

The transit peptide at 1-20 (MYLSKIICKKVPMKLLCTRN) directs the protein to the mitochondrion. Over 21–107 (AATVSAAATN…GPRAFSHISQ (87 aa)) the chain is Mitochondrial matrix. Residues 108-128 (KTVFWGTVAGLTIGVVLFGLI) form a helical membrane-spanning segment. At 129-186 (RTQAAPSPRTMTREWQEKSNEYMKENKINPISGEASEGFKGRGQISGGIFSPSEKDKK) the chain is on the mitochondrial intermembrane side. The tract at residues 149–186 (EYMKENKINPISGEASEGFKGRGQISGGIFSPSEKDKK) is disordered.

It belongs to the cytochrome c oxidase IV family. As to quaternary structure, component of the cytochrome c oxidase (complex IV, CIV), a multisubunit enzyme composed of a catalytic core of 3 subunits and seevral supernumerary subunits. The complex exists as a monomer or a dimer and forms supercomplexes (SCs) in the inner mitochondrial membrane with ubiquinol-cytochrome c oxidoreductase (cytochrome b-c1 complex, complex III, CIII).

It localises to the mitochondrion inner membrane. The protein operates within energy metabolism; oxidative phosphorylation. Functionally, component of the cytochrome c oxidase, the last enzyme in the mitochondrial electron transport chain which drives oxidative phosphorylation. The respiratory chain contains 3 multisubunit complexes succinate dehydrogenase (complex II, CII), ubiquinol-cytochrome c oxidoreductase (cytochrome b-c1 complex, complex III, CIII) and cytochrome c oxidase (complex IV, CIV), that cooperate to transfer electrons derived from NADH and succinate to molecular oxygen, creating an electrochemical gradient over the inner membrane that drives transmembrane transport and the ATP synthase. Cytochrome c oxidase is the component of the respiratory chain that catalyzes the reduction of oxygen to water. Electrons originating from reduced cytochrome c in the intermembrane space (IMS) are transferred via the dinuclear copper A center (CU(A)) of subunit 2 and heme A of subunit 1 to the active site in subunit 1, a binuclear center (BNC) formed by heme A3 and copper B (CU(B)). The BNC reduces molecular oxygen to 2 water molecules using 4 electrons from cytochrome c in the IMS and 4 protons from the mitochondrial matrix. The polypeptide is Cytochrome c oxidase polypeptide 5, mitochondrial (cox5) (Schizosaccharomyces pombe (strain 972 / ATCC 24843) (Fission yeast)).